The primary structure comprises 307 residues: Pseudouridine-5'-phosphate glycosidase (307 aa).

E26 (proton donor) is an active-site residue. Substrate-binding residues include K88 and V108. D140 contacts Mn(2+). Position 142–144 (142–144 (SAD)) interacts with substrate. Catalysis depends on K161, which acts as the Nucleophile.

The protein belongs to the pseudouridine-5'-phosphate glycosidase family. Homotrimer. It depends on Mn(2+) as a cofactor.

It carries out the reaction D-ribose 5-phosphate + uracil = psi-UMP + H2O. Functionally, catalyzes the reversible cleavage of pseudouridine 5'-phosphate (PsiMP) to ribose 5-phosphate and uracil. Functions biologically in the cleavage direction, as part of a pseudouridine degradation pathway. This Clostridium botulinum (strain Langeland / NCTC 10281 / Type F) protein is Pseudouridine-5'-phosphate glycosidase.